A 233-amino-acid polypeptide reads, in one-letter code: 6-carboxyhexanoate--CoA ligase (233 aa).

The protein belongs to the BioW family. In terms of assembly, homodimer. Mg(2+) serves as cofactor.

It carries out the reaction heptanedioate + ATP + CoA = 6-carboxyhexanoyl-CoA + AMP + diphosphate. The protein operates within metabolic intermediate metabolism; pimeloyl-CoA biosynthesis; pimeloyl-CoA from pimelate: step 1/1. Its function is as follows. Catalyzes the transformation of pimelate into pimeloyl-CoA with concomitant hydrolysis of ATP to AMP. The polypeptide is 6-carboxyhexanoate--CoA ligase (Methanocaldococcus sp. (strain FS406-22)).